Reading from the N-terminus, the 207-residue chain is Ribonuclease HII (207 aa).

The region spanning 5–207 is the RNase H type-2 domain; sequence PLIIGVDEAG…APVRALLRPC (203 aa). Positions 11, 12, and 117 each coordinate a divalent metal cation.

The protein belongs to the RNase HII family. Mn(2+) serves as cofactor. Mg(2+) is required as a cofactor.

Its subcellular location is the cytoplasm. The enzyme catalyses Endonucleolytic cleavage to 5'-phosphomonoester.. In terms of biological role, endonuclease that specifically degrades the RNA of RNA-DNA hybrids. The sequence is that of Ribonuclease HII from Hyphomonas neptunium (strain ATCC 15444).